Consider the following 403-residue polypeptide: Propionate kinase (403 aa).

The protein belongs to the acetokinase family. PduW subfamily.

Its subcellular location is the cytoplasm. It catalyses the reaction propanoate + ATP = propanoyl phosphate + ADP. Its pathway is polyol metabolism; 1,2-propanediol degradation. Its function is as follows. Works with phosphate acetyltransferase (pta) to capture exogenous propionate and regenerate propionyl-CoA during degradation of 1,2-propanediol (1,2-PD). This Citrobacter rodentium (strain ICC168) (Citrobacter freundii biotype 4280) protein is Propionate kinase.